Here is a 671-residue protein sequence, read N- to C-terminus: MITGIISILCYLQCFGTLSASVTAKNENGNFVLKNKNVELVFANGKEFLFKEFRMDGMNILPVDGSTTHPWQLIYRGPNGENPTLMPRWGEYKGGEIQKTQDASTLIFTWQMVIDAGPTCPVRILVTLGKDAELPEWRIEAEMPEGWVITESEFPRIAVNRPEGAKGILPVGFGTEYTIGNEGQLQSRYPSCTGTMQLVLMHHKGGTVYFAAQDKGGSGKVFRMKSEGKSLVFIQNVTTSYAWTQNKKFCIPWETVMGFTQKGWQDAAVQWYRPFTFETLWGAKTISERPIAEWIKNADMWLRPGEVNAETMEAVRKAMKYYGKGVGLHWYYWHNHRFDTKYPEYFPEKAGFKEMIKETQELGGFITPYINGRLWDPATDSYKTLNGKDASCRKADGTLYTEVYSSKVLNTVTCPASYIWRDVLKGVNKQILTELKTNGVYMDQIGCANSEPCYATNHGHAPGGGDWWPFAYRSLLTEMRTNLYKENQAMTTEENAECYIDLFDMMLVVNSPHNSYTKMVPLFPLIYSDRCIYSGYTYIPWRITDGSLNFMSMRSLLWGSQLGWVEPSLLMRPDAKREAKFLKNLTDFRRQQHDLFLGGRFIQEIIPTGDNPTQEIPNYEITSVVLAAEWASVSGEHVYLIVNMSEQEHKVTLPNKKQITVKALDAIRISK.

Residues 1–24 (MITGIISILCYLQCFGTLSASVTA) form the signal peptide.

It belongs to the glycoside hydrolase-like 3 (GHL3) family.

This is Putative glycoside hydrolase BT_3595 from Bacteroides thetaiotaomicron (strain ATCC 29148 / DSM 2079 / JCM 5827 / CCUG 10774 / NCTC 10582 / VPI-5482 / E50).